The chain runs to 168 residues: Sperm acrosome-associated protein 9 (168 aa).

As to quaternary structure, microtubule inner protein component of sperm flagellar doublet microtubules. Interacts with CABP1 and CALR. Interacts with INCA1. Interacts with microtubules. As to expression, testis-specific. Expressed in round spermatids.

The protein localises to the cytoplasm. The protein resides in the cytoplasmic vesicle. It localises to the secretory vesicle. It is found in the acrosome. Its subcellular location is the cytoskeleton. The protein localises to the cilium basal body. The protein resides in the flagellum axoneme. It localises to the cilium axoneme. It is found in the nucleus. Its function is as follows. Microtubule inner protein (MIP) part of the dynein-decorated doublet microtubules (DMTs) of multiciliated respiratory cells and the distal singlet microtubules of monoflagellated spermatozoa. Forms an extensive interaction network cross-linking the lumen of axonemal doublet microtubules. This is Sperm acrosome-associated protein 9 (Spaca9) from Rattus norvegicus (Rat).